The primary structure comprises 237 residues: LexA repressor (237 aa).

Positions 26–46 (FDEMKDALDLRSKSGIHRLIT) form a DNA-binding region, H-T-H motif. Active-site for autocatalytic cleavage activity residues include S158 and K196.

Belongs to the peptidase S24 family. Homodimer.

It carries out the reaction Hydrolysis of Ala-|-Gly bond in repressor LexA.. In terms of biological role, represses a number of genes involved in the response to DNA damage (SOS response), including recA and lexA. In the presence of single-stranded DNA, RecA interacts with LexA causing an autocatalytic cleavage which disrupts the DNA-binding part of LexA, leading to derepression of the SOS regulon and eventually DNA repair. The polypeptide is LexA repressor (Rhodopseudomonas palustris (strain BisA53)).